Consider the following 295-residue polypeptide: Regucalcin (295 aa).

An a divalent metal cation-binding site is contributed by glutamate 18. Substrate-binding residues include arginine 100, asparagine 102, and aspartate 120. Residues asparagine 150 and aspartate 200 each contribute to the a divalent metal cation site. Residue aspartate 200 is the Proton donor/acceptor of the active site.

Belongs to the SMP-30/CGR1 family. Zn(2+) serves as cofactor. The cofactor is Mn(2+). Requires Ca(2+) as cofactor. It depends on Mg(2+) as a cofactor.

The protein resides in the cytoplasm. The catalysed reaction is D-glucono-1,5-lactone + H2O = D-gluconate + H(+). It functions in the pathway cofactor biosynthesis; L-ascorbate biosynthesis via UDP-alpha-D-glucuronate pathway; L-ascorbate from UDP-alpha-D-glucuronate: step 3/4. Its function is as follows. Gluconolactonase with low activity towards other sugar lactones, including gulonolactone and galactonolactone. Catalyzes a key step in ascorbic acid (vitamin C) biosynthesis. Can also hydrolyze diisopropyl phosphorofluoridate and phenylacetate (in vitro). Calcium-binding protein. Modulates Ca(2+) signaling, and Ca(2+)-dependent cellular processes and enzyme activities. This chain is Regucalcin, found in Danio rerio (Zebrafish).